The chain runs to 272 residues: Acyl-[acyl-carrier-protein]--UDP-N-acetylglucosamine O-acyltransferase (272 aa).

It belongs to the transferase hexapeptide repeat family. LpxA subfamily. In terms of assembly, homotrimer.

It localises to the cytoplasm. It catalyses the reaction a (3R)-hydroxyacyl-[ACP] + UDP-N-acetyl-alpha-D-glucosamine = a UDP-3-O-[(3R)-3-hydroxyacyl]-N-acetyl-alpha-D-glucosamine + holo-[ACP]. It functions in the pathway glycolipid biosynthesis; lipid IV(A) biosynthesis; lipid IV(A) from (3R)-3-hydroxytetradecanoyl-[acyl-carrier-protein] and UDP-N-acetyl-alpha-D-glucosamine: step 1/6. Its function is as follows. Involved in the biosynthesis of lipid A, a phosphorylated glycolipid that anchors the lipopolysaccharide to the outer membrane of the cell. The sequence is that of Acyl-[acyl-carrier-protein]--UDP-N-acetylglucosamine O-acyltransferase from Rhizobium johnstonii (strain DSM 114642 / LMG 32736 / 3841) (Rhizobium leguminosarum bv. viciae).